The following is a 187-amino-acid chain: Ribosome-recycling factor (187 aa).

The protein belongs to the RRF family.

It localises to the cytoplasm. Functionally, responsible for the release of ribosomes from messenger RNA at the termination of protein biosynthesis. May increase the efficiency of translation by recycling ribosomes from one round of translation to another. This Mycoplasmopsis pulmonis (strain UAB CTIP) (Mycoplasma pulmonis) protein is Ribosome-recycling factor.